A 196-amino-acid chain; its full sequence is [1-hydroxy-2-(trimethylamino)ethyl]phosphonate dioxygenase (glycine-betaine-forming) (196 aa).

Position 30 (Y30) interacts with [(1R)-1-hydroxy-2-(trimethylamino)ethyl]phosphonate. Residues Y30, H40, H64, and D65 each coordinate Fe cation. The region spanning 37-156 (MAEHMLQGAT…VAEFEKNPNL (120 aa)) is the HD domain. [(1R)-1-hydroxy-2-(trimethylamino)ethyl]phosphonate contacts are provided by H68, H86, H109, K113, S131, S134, and R163. Fe cation-binding residues include H86 and H109. D166 is a binding site for Fe cation.

The cofactor is Fe cation.

It carries out the reaction [(1R)-1-hydroxy-2-(trimethylamino)ethyl]phosphonate + O2 = glycine betaine + phosphate + 2 H(+). Involved in the degradation of the naturally occurring organophosphonate 2-(trimethylammonio)ethylphosphonate (TMAEP). Catalyzes the O(2)-dependent cleavage of (R)-1-hydroxy-2-(trimethylammonio)ethylphosphonate (OH-TMAEP) to yield glycine betaine and phosphate. Is highly specific for its N-trimethylated substrate. The protein is [1-hydroxy-2-(trimethylamino)ethyl]phosphonate dioxygenase (glycine-betaine-forming) of Leisingera caerulea (Phaeobacter caeruleus).